The sequence spans 30 residues: V-type proton ATPase catalytic subunit A isoform 2 (30 aa).

It belongs to the ATPase alpha/beta chains family. V-ATPase is a heteromultimeric enzyme composed of a peripheral catalytic V1 complex (main components: subunits A, B, C, D, E, and F) attached to an integral membrane V0 proton pore complex (main component: the proteolipid protein).

It catalyses the reaction ATP + H2O + 4 H(+)(in) = ADP + phosphate + 5 H(+)(out). In terms of biological role, catalytic subunit of the peripheral V1 complex of vacuolar ATPase. V-ATPase vacuolar ATPase is responsible for acidifying a variety of intracellular compartments in eukaryotic cells. This Equisetum arvense (Field horsetail) protein is V-type proton ATPase catalytic subunit A isoform 2.